A 388-amino-acid polypeptide reads, in one-letter code: MAGCCSVLGSFLFEYDTPRIVLIRSRKVGLMNRAVQLLILAYVIGWVFVWEKGYQETDSVVSSVTTKAKGVAVTNTSQLGFRIWDVADYVIPAQEENSLFIMTNMIVTVNQTQSTCPEIPDKTSICNSDADCTPGSVDTHSSGVATGRCVPFNESVKTCEVAAWCPVENDVGVPTPAFLKAAENFTLLVKNNIWYPKFNFSKRNILPNITTSYLKSCIYNAQTDPFCPIFRLGTIVEDAGHSFQEMAVEGGIMGIQIKWDCNLDRAASLCLPRYSFRRLDTRDLEHNVSPGYNFRFAKYYRDLAGKEQRTLTKAYGIRFDIIVFGKAGKFDIIPTMINVGSGLALLGVATVLCDVIVLYCMKKKYYYRDKKYKYVEDYEQGLSGEMNQ.

Residues 1–33 (MAGCCSVLGSFLFEYDTPRIVLIRSRKVGLMNR) lie on the Cytoplasmic side of the membrane. A helical membrane pass occupies residues 34–54 (AVQLLILAYVIGWVFVWEKGY). The Extracellular portion of the chain corresponds to 55–338 (QETDSVVSSV…KFDIIPTMIN (284 aa)). ATP is bound by residues K67 and K69. CTP-binding residues include K67 and K69. N-linked (GlcNAc...) asparagine glycans are attached at residues N75 and N110. Cystine bridges form between C116/C165, C126/C149, and C132/C159. N-linked (GlcNAc...) asparagine glycosylation is found at N153 and N184. T186 and L188 together coordinate ATP. A CTP-binding site is contributed by T186. N199 and N208 each carry an N-linked (GlcNAc...) asparagine glycan. 2 disulfides stabilise this stretch: C217–C227 and C261–C270. ATP-binding residues include N293, R295, and K313. CTP is bound by residues N293, R295, and K313. The chain crosses the membrane as a helical span at residues 339–359 (VGSGLALLGVATVLCDVIVLY). At 360-388 (CMKKKYYYRDKKYKYVEDYEQGLSGEMNQ) the chain is on the cytoplasmic side.

The protein belongs to the P2X receptor family. Functional P2RXs are organized as homomeric and heteromeric trimers. Forms heterotrimer with P2RX1. Interacts with P2RX7 (via C-terminus); this interaction is functional only in the presence of ATP. Forms heterotrimer with P2RX4; functional differences between homomeric P2RX4 and P2RX4/6 heterotrimer are minor. Interacts with AP1M2. Widespread distribution in the brain. Strongly expressed in microglial cells. Also expressed in epithelial cells.

It localises to the cell membrane. The protein localises to the lysosome membrane. The catalysed reaction is K(+)(in) = K(+)(out). It catalyses the reaction Na(+)(in) = Na(+)(out). It carries out the reaction Ca(2+)(in) = Ca(2+)(out). Activated by ATP. pH-dependent and inhibited by acidic pH. Functionally, ATP-gated nonselective transmembrane cation channel permeable to potassium, sodium and calcium. CTP, but not GTP or UTP, functions as a weak affinity agonist for P2RX4. Activated by extracellularly released ATP, it plays multiple role in immunity and central nervous system physiology. Plays a key role in initial steps of T-cell activation and Ca(2+) microdomain formation. Also participates in basal T-cell activity without TCR/CD3 stimulation. Promotes the differentiation and activation of Th17 cells via expression of retinoic acid-related orphan receptor C/RORC. Upon activation, drives microglia motility via the PI3K/Akt pathway. Could also function as an ATP-gated cation channel of lysosomal membranes. This chain is P2X purinoceptor 4 (P2rx4), found in Rattus norvegicus (Rat).